The primary structure comprises 206 residues: MGSRPRGALSLLLLLLAPPSRPASGCPAPCRCSETRVDCGRRGLTWASLPAAFPPDTTELVLTDNNLTALPPGLLDTLPALRRVHLGANPWRCDCRLLPLRAWLAGRPEREFYRDLRCVAPLALRGRLLPYVAEDELRAACAPGLLCWGALVAQLALLVLGLLHALLLALLLSRLRRLRAQARARSTREFSLTAPLVAESAGGGAS.

The first 26 residues, 1 to 26 (MGSRPRGALSLLLLLLAPPSRPASGC), serve as a signal peptide directing secretion. 2 disulfide bridges follow: cysteine 26–cysteine 32 and cysteine 30–cysteine 39. The region spanning 27 to 55 (PAPCRCSETRVDCGRRGLTWASLPAAFPP) is the LRRNT domain. At 27–150 (PAPCRCSETR…CAPGLLCWGA (124 aa)) the chain is on the extracellular side. The stretch at 60–83 (LVLTDNNLTALPPGLLDTLPALRR) is one LRR repeat. The LRRCT domain occupies 89-143 (NPWRCDCRLLPLRAWLAGRPEREFYRDLRCVAPLALRGRLLPYVAEDELRAACAP). Cystine bridges form between cysteine 93–cysteine 118 and cysteine 95–cysteine 141. A helical transmembrane segment spans residues 151–171 (LVAQLALLVLGLLHALLLALL). Topologically, residues 172-206 (LSRLRRLRAQARARSTREFSLTAPLVAESAGGGAS) are cytoplasmic. Serine 186 carries the phosphoserine modification. Serine 191 carries the post-translational modification Phosphoserine; by PKA. At threonine 193 the chain carries Phosphothreonine. Serine 200 bears the Phosphoserine mark.

Two GP-Ib beta are disulfide-linked to one GP-Ib alpha. GP-IX is complexed with the GP-Ib heterodimer via a non covalent linkage. Interacts with TRAF4.

Its subcellular location is the membrane. Gp-Ib, a surface membrane protein of platelets, participates in the formation of platelet plugs by binding to von Willebrand factor, which is already bound to the subendothelium. The sequence is that of Platelet glycoprotein Ib beta chain (Gp1bb) from Rattus norvegicus (Rat).